Reading from the N-terminus, the 218-residue chain is Thiopurine S-methyltransferase (218 aa).

S-adenosyl-L-methionine is bound by residues Trp-10, Leu-45, Glu-66, and Arg-123.

Belongs to the class I-like SAM-binding methyltransferase superfamily. TPMT family.

Its subcellular location is the cytoplasm. The catalysed reaction is S-adenosyl-L-methionine + a thiopurine = S-adenosyl-L-homocysteine + a thiopurine S-methylether.. This chain is Thiopurine S-methyltransferase, found in Xanthomonas axonopodis pv. citri (strain 306).